The following is a 188-amino-acid chain: UPF0398 protein SSP1297 (188 aa).

Belongs to the UPF0398 family.

This is UPF0398 protein SSP1297 from Staphylococcus saprophyticus subsp. saprophyticus (strain ATCC 15305 / DSM 20229 / NCIMB 8711 / NCTC 7292 / S-41).